A 385-amino-acid chain; its full sequence is MAAAAARWNHVWVGTETGILKGVNLQRKQAANFTAGGQPRREEAVSALCWGTGGETQMLVGCADRTVKHFSTEDGIFQGQRHCPGGEGMFRGLAQADGTLITCVDSGILRVWHDKDKDTSSDPLLELRVGPGVCRMRQDPAHPHVVATGGKENALKIWDLQGSEEPVFRAKNVRNDWLDLRVPIWDQDIQFLPGSQKLVTCTGYHQVRVYDPASPQRRPVLETTYGEYPLTAMTLTPGGNSVIVGNTHGQLAEIDLRQGRLLGCLKGLAGSVRGLQCHPSKPLLASCGLDRVLRIHRIQNPRGLEHKVYLKSQLNCLLLSGRDNWEDEPQEPQEPNKVPLEDTETDELWASLEAAAKRKLSGLEQPQGALQTRRRKKKRPGSTSP.

WD repeat units lie at residues 40-80, 83-122, 128-168, 179-220, 224-266, and 267-306; these read RREE…FQGQ, CPGG…TSSD, RVGP…EPVF, DLRV…RRPV, TYGE…GCLK, and GLAG…GLEH. At Ser-214 the chain carries Phosphoserine. Lys-311 is subject to N6-methyllysine. Positions 320–385 are required for nucleolar and nuclear location; sequence SGRDNWEDEP…KKKRPGSTSP (66 aa). Disordered stretches follow at residues 323 to 345 and 360 to 385; these read DNWE…DTET and LSGL…STSP. The residue at position 361 (Ser-361) is a Phosphoserine. Basic residues predominate over residues 372–385; that stretch reads TRRRKKKRPGSTSP.

In terms of assembly, isoform 1 interacts (through WDR repeats) with NVL; the interaction is independent of RNA or pre-60S ribosome particles. Isoform 2 does not interact with NVL. Interacts with MTREX; the interaction dissociation in a late stage of rRNA synthesis is required for appropriate maturation of pre-60S particles and depends on the ATPase activity of NVL.

It is found in the nucleus. The protein localises to the nucleolus. Regulatory protein of the MTREX-exosome complex involved in the synthesis of the 60S ribosomal subunit. Participates in an early cleavage of the pre-rRNA processing pathway in cooperation with NVL. Required for blastocyst formation, is necessary for RNA transcription, processing and/or stability during preimplantation development. This chain is WD repeat-containing protein 74 (WDR74), found in Homo sapiens (Human).